The sequence spans 78 residues: Large ribosomal subunit protein bL28 (78 aa).

This sequence belongs to the bacterial ribosomal protein bL28 family.

The chain is Large ribosomal subunit protein bL28 from Pasteurella multocida (strain Pm70).